A 404-amino-acid polypeptide reads, in one-letter code: Phosphoglycerate kinase (404 aa).

Substrate-binding positions include 22–24 (DFN), R37, 60–63 (HLGR), R120, and R160. ATP-binding positions include K215, E333, and 360-363 (GGDS).

The protein belongs to the phosphoglycerate kinase family. In terms of assembly, monomer.

Its subcellular location is the cytoplasm. The catalysed reaction is (2R)-3-phosphoglycerate + ATP = (2R)-3-phospho-glyceroyl phosphate + ADP. Its pathway is carbohydrate degradation; glycolysis; pyruvate from D-glyceraldehyde 3-phosphate: step 2/5. The chain is Phosphoglycerate kinase from Latilactobacillus sakei subsp. sakei (strain 23K) (Lactobacillus sakei subsp. sakei).